Reading from the N-terminus, the 292-residue chain is Tissue factor (292 aa).

The signal sequence occupies residues 1–35 (MATPNGPRVPCPQAAVARALLFGLVLIQGAGVAGT). Residues 36 to 248 (TDVVVAYNIT…TSHEKVLSTE (213 aa)) lie on the Extracellular side of the membrane. Asn-43 carries an N-linked (GlcNAc...) asparagine glycan. The short motif at 46-48 (WKS) is the WKS motif element. Residues Cys-81 and Cys-89 are joined by a disulfide bond. N-linked (GlcNAc...) asparagine glycans are attached at residues Asn-153 and Asn-181. Cys-215 and Cys-238 are oxidised to a cystine. Residues 249–271 (LFFIIGTVMLVIIIFIVVLSVSL) form a helical membrane-spanning segment. Over 272 to 292 (HKCRKVRAERSGKENTPLNAA) the chain is Cytoplasmic. Cys-274 is lipidated: S-palmitoyl cysteine.

Belongs to the tissue factor family. As to quaternary structure, interacts with HSPE; the interaction, inhibited by heparin, promotes the generation of activated factor X and activates coagulation in the presence of activated factor VII.

Its subcellular location is the membrane. In terms of biological role, initiates blood coagulation by forming a complex with circulating factor VII or VIIa. The [TF:VIIa] complex activates factors IX or X by specific limited proteolysis. TF plays a role in normal hemostasis by initiating the cell-surface assembly and propagation of the coagulation protease cascade. The chain is Tissue factor (F3) from Bos taurus (Bovine).